Consider the following 37-residue polypeptide: Large ribosomal subunit protein bL36 (37 aa).

The protein belongs to the bacterial ribosomal protein bL36 family.

This is Large ribosomal subunit protein bL36 from Mycoplasmopsis pulmonis (strain UAB CTIP) (Mycoplasma pulmonis).